We begin with the raw amino-acid sequence, 34 residues long: Photosystem II reaction center protein Psb30 (34 aa).

The chain crosses the membrane as a helical span at residues 7 to 27; the sequence is VAQLLALFVIITSGPAIIILI.

It belongs to the Psb30/Ycf12 family. In terms of assembly, PSII is composed of 1 copy each of membrane proteins PsbA, PsbB, PsbC, PsbD, PsbE, PsbF, PsbH, PsbI, PsbJ, PsbK, PsbL, PsbM, PsbT, PsbX, PsbY, PsbZ, Psb30/Ycf12, peripheral proteins of the oxygen-evolving complex and a large number of cofactors. It forms dimeric complexes.

The protein resides in the plastid. Its subcellular location is the chloroplast thylakoid membrane. Functionally, a core subunit of photosystem II (PSII), probably helps stabilize the reaction center. The chain is Photosystem II reaction center protein Psb30 from Guillardia theta (Cryptophyte).